Here is a 322-residue protein sequence, read N- to C-terminus: UDP-N-acetylenolpyruvoylglucosamine reductase (322 aa).

The region spanning 36-202 is the FAD-binding PCMH-type domain; sequence RAGGPAQVLF…TSVLFEGVPG (167 aa). Arginine 182 is a catalytic residue. Catalysis depends on serine 231, which acts as the Proton donor. Glutamate 301 is a catalytic residue.

Belongs to the MurB family. FAD serves as cofactor.

The protein resides in the cytoplasm. It catalyses the reaction UDP-N-acetyl-alpha-D-muramate + NADP(+) = UDP-N-acetyl-3-O-(1-carboxyvinyl)-alpha-D-glucosamine + NADPH + H(+). Its pathway is cell wall biogenesis; peptidoglycan biosynthesis. Its function is as follows. Cell wall formation. In Brucella suis biovar 1 (strain 1330), this protein is UDP-N-acetylenolpyruvoylglucosamine reductase.